Reading from the N-terminus, the 602-residue chain is Isocyanide synthase A (602 aa).

The protein belongs to the isocyanide synthase family.

Functionally, isocyanide synthase involved in the biosynthesis of isocyanides (or isonitriles), a class of microbial secondary metabolites. The presence of an isonitrile moiety within a compound imparts unique biological (cytotoxic, antibacterial, and antiprotozoal) and chemical (transition metal coordination) properties and enables synthetic and biochemical applications. The protein is Isocyanide synthase A of Aspergillus fumigatus (strain ATCC MYA-4609 / CBS 101355 / FGSC A1100 / Af293) (Neosartorya fumigata).